Consider the following 100-residue polypeptide: MRYERLAPEAIPGALRDLDGWSLSEQGDAITKEFSFDDFAQAFGFMTECAIIAEKMGHHPEWFNVYRRVDVRLTTHDVGGLTGHDLKLAAAMDQVAKRRV.

It belongs to the pterin-4-alpha-carbinolamine dehydratase family.

It carries out the reaction (4aS,6R)-4a-hydroxy-L-erythro-5,6,7,8-tetrahydrobiopterin = (6R)-L-erythro-6,7-dihydrobiopterin + H2O. This is Putative pterin-4-alpha-carbinolamine dehydratase from Allorhizobium ampelinum (strain ATCC BAA-846 / DSM 112012 / S4) (Agrobacterium vitis (strain S4)).